The sequence spans 606 residues: Chaperone protein DnaK (606 aa).

A Phosphothreonine; by autocatalysis modification is found at Thr174. The tract at residues 576–606 (QAAGSANPGGSQGTSQGNVYEADYKVEDDNK) is disordered. Over residues 597–606 (ADYKVEDDNK) the composition is skewed to basic and acidic residues.

It belongs to the heat shock protein 70 family.

Its function is as follows. Acts as a chaperone. This is Chaperone protein DnaK from Caldanaerobacter subterraneus subsp. tengcongensis (strain DSM 15242 / JCM 11007 / NBRC 100824 / MB4) (Thermoanaerobacter tengcongensis).